The sequence spans 431 residues: Adenylosuccinate synthetase (431 aa).

GTP is bound by residues 13-19 (GDEGKGK) and 41-43 (GHT). The active-site Proton acceptor is Asp14. 2 residues coordinate Mg(2+): Asp14 and Gly41. Residues 14–17 (DEGK), 39–42 (NAGH), Thr130, Arg144, Gln225, Thr240, and Arg304 contribute to the IMP site. Catalysis depends on His42, which acts as the Proton donor. Residue 300 to 306 (AVTGRPR) participates in substrate binding. GTP contacts are provided by residues Arg306, 332–334 (KLD), and 415–417 (STG).

It belongs to the adenylosuccinate synthetase family. In terms of assembly, homodimer. Mg(2+) serves as cofactor.

Its subcellular location is the cytoplasm. The catalysed reaction is IMP + L-aspartate + GTP = N(6)-(1,2-dicarboxyethyl)-AMP + GDP + phosphate + 2 H(+). The protein operates within purine metabolism; AMP biosynthesis via de novo pathway; AMP from IMP: step 1/2. Plays an important role in the de novo pathway of purine nucleotide biosynthesis. Catalyzes the first committed step in the biosynthesis of AMP from IMP. The sequence is that of Adenylosuccinate synthetase from Legionella pneumophila subsp. pneumophila (strain Philadelphia 1 / ATCC 33152 / DSM 7513).